A 205-amino-acid polypeptide reads, in one-letter code: Large ribosomal subunit protein uL4 (205 aa).

Belongs to the universal ribosomal protein uL4 family. Part of the 50S ribosomal subunit.

Functionally, one of the primary rRNA binding proteins, this protein initially binds near the 5'-end of the 23S rRNA. It is important during the early stages of 50S assembly. It makes multiple contacts with different domains of the 23S rRNA in the assembled 50S subunit and ribosome. In terms of biological role, forms part of the polypeptide exit tunnel. The polypeptide is Large ribosomal subunit protein uL4 (Dinoroseobacter shibae (strain DSM 16493 / NCIMB 14021 / DFL 12)).